The chain runs to 364 residues: Putative methylthioribose-1-phosphate isomerase (364 aa).

Substrate-binding positions include 57–59 (RGA), R100, and Q206. D247 (proton donor) is an active-site residue. 257–258 (NK) serves as a coordination point for substrate.

The protein belongs to the eIF-2B alpha/beta/delta subunits family. MtnA subfamily.

The catalysed reaction is 5-(methylsulfanyl)-alpha-D-ribose 1-phosphate = 5-(methylsulfanyl)-D-ribulose 1-phosphate. Functionally, catalyzes the interconversion of methylthioribose-1-phosphate (MTR-1-P) into methylthioribulose-1-phosphate (MTRu-1-P). In Pyrococcus horikoshii (strain ATCC 700860 / DSM 12428 / JCM 9974 / NBRC 100139 / OT-3), this protein is Putative methylthioribose-1-phosphate isomerase.